We begin with the raw amino-acid sequence, 208 residues long: Methyl-CpG-binding domain protein 3-like 2 (208 aa).

An interacts with MBD3 region spans residues 1–89; the sequence is MGEPAFTSFP…HLEKPQQLCA (89 aa).

The protein belongs to the MBD3L family. As to quaternary structure, interacts (via N-terminus) with MBD3; the interaction is direct. Interacts with MTA1. Interacts with HDAC1. Interacts with HDAC2. Interacts with RBBP4. Interacts with RBBP7. As to expression, detected at low levels in several somatic tissues. Highly expressed in the ovarian teratocarcinoma cell line PA-1.

Its subcellular location is the nucleus. May displace the NuRD complex from chromatin. The protein is Methyl-CpG-binding domain protein 3-like 2 (MBD3L2) of Homo sapiens (Human).